A 75-amino-acid polypeptide reads, in one-letter code: KGSSGMMSMVAAAIAANRTKKGASAQAIRKYVAAHSSLKGAVLNFRLRRALAAGLKSGALAHPKGSAGWVLVPKK.

The H15 domain occupies 2–74 (GSSGMMSMVA…GSAGWVLVPK (73 aa)).

It belongs to the histone H1/H5 family. As to expression, sperm.

It is found in the nucleus. It localises to the chromosome. Linker histones are implicated in chromatin remodeling and/or transcriptional regulation during spermiogenesis, the process of spermatid maturation into spermatozoa. This chain is Sperm-specific protein PL-I, found in Spisula solidissima (Atlantic surf-clam).